Here is a 66-residue protein sequence, read N- to C-terminus: Large ribosomal subunit protein bL35 (66 aa).

Positions 1–26 are disordered; it reads MPKQKTHRGAAKRFKKTGSGKLKRSH.

This sequence belongs to the bacterial ribosomal protein bL35 family.

This chain is Large ribosomal subunit protein bL35, found in Bacillus anthracis.